The following is a 552-amino-acid chain: Putative transport protein HS_1470 (552 aa).

5 helical membrane-spanning segments follow: residues 4–24 (IAIT…IGHW), 28–48 (GVGL…HFMN), 67–87 (LILF…ASLL), 95–115 (GLAT…YKVV), and 157–177 (MAYA…MWLI). RCK C-terminal domains lie at 190 to 275 (KQFQ…VIGE) and 277 to 360 (IDMP…IIGN). The next 6 membrane-spanning stretches (helical) occupy residues 370–390 (MLPV…PFYI), 402–424 (AGGP…LYWF), 438–458 (IVLF…DTLV), 463–483 (LEWM…TGII), 495–515 (LCGL…ANAI), and 529–549 (VYPL…ILLW).

It belongs to the AAE transporter (TC 2.A.81) family. YidE subfamily.

The protein resides in the cell membrane. This is Putative transport protein HS_1470 from Histophilus somni (strain 129Pt) (Haemophilus somnus).